We begin with the raw amino-acid sequence, 263 residues long: Purine nucleoside phosphorylase SACOL1200 (263 aa).

Zn(2+) is bound by residues H79, C124, and H141.

It belongs to the purine nucleoside phosphorylase YfiH/LACC1 family. In terms of assembly, homodimer. Cu(2+) serves as cofactor. Requires Zn(2+) as cofactor.

The enzyme catalyses adenosine + phosphate = alpha-D-ribose 1-phosphate + adenine. It catalyses the reaction S-methyl-5'-thioadenosine + phosphate = 5-(methylsulfanyl)-alpha-D-ribose 1-phosphate + adenine. The catalysed reaction is inosine + phosphate = alpha-D-ribose 1-phosphate + hypoxanthine. It carries out the reaction adenosine + H2O + H(+) = inosine + NH4(+). In terms of biological role, purine nucleoside enzyme that catalyzes the phosphorolysis of adenosine and inosine nucleosides, yielding D-ribose 1-phosphate and the respective free bases, adenine and hypoxanthine. Also catalyzes the phosphorolysis of S-methyl-5'-thioadenosine into adenine and S-methyl-5-thio-alpha-D-ribose 1-phosphate. Also has adenosine deaminase activity. This is Purine nucleoside phosphorylase SACOL1200 from Staphylococcus aureus (strain COL).